The following is a 327-amino-acid chain: Transcription factor bHLH71 (327 aa).

Disordered stretches follow at residues 46-88 (ISEI…NQRM) and 151-176 (AKLN…HQPS). Over residues 65–76 (RGKKRRRRKPRV) the composition is skewed to basic residues. Over residues 77–88 (CKNEEEAENQRM) the composition is skewed to basic and acidic residues. The bHLH domain maps to 85 to 136 (NQRMTHIAVERNRRRQMNQHLSVLRSLMPQPFAHKGDQASIVGGAIDFIKEL). The span at 152–169 (KLNQSVTSSTSQDSNGEQ) shows a compositional bias: polar residues.

As to quaternary structure, homodimer. Interacts with FAMA. Expressed in leaves, stems, and flowers.

It localises to the nucleus. Its function is as follows. Transcription factor. May be involved in the differentiation of stomatal guard cells. In Arabidopsis thaliana (Mouse-ear cress), this protein is Transcription factor bHLH71 (BHLH71).